An 89-amino-acid polypeptide reads, in one-letter code: Cell division topological specificity factor (89 aa).

It belongs to the MinE family.

Functionally, prevents the cell division inhibition by proteins MinC and MinD at internal division sites while permitting inhibition at polar sites. This ensures cell division at the proper site by restricting the formation of a division septum at the midpoint of the long axis of the cell. The protein is Cell division topological specificity factor of Pectobacterium carotovorum subsp. carotovorum (strain PC1).